The primary structure comprises 58 residues: Large ribosomal subunit protein uL30 (58 aa).

The protein belongs to the universal ribosomal protein uL30 family. Part of the 50S ribosomal subunit.

The polypeptide is Large ribosomal subunit protein uL30 (Vibrio vulnificus (strain CMCP6)).